Here is a 309-residue protein sequence, read N- to C-terminus: Porphobilinogen deaminase (309 aa).

Cys-243 carries the post-translational modification S-(dipyrrolylmethanemethyl)cysteine.

It belongs to the HMBS family. As to quaternary structure, monomer. Dipyrromethane serves as cofactor.

It carries out the reaction 4 porphobilinogen + H2O = hydroxymethylbilane + 4 NH4(+). Its pathway is porphyrin-containing compound metabolism; protoporphyrin-IX biosynthesis; coproporphyrinogen-III from 5-aminolevulinate: step 2/4. Tetrapolymerization of the monopyrrole PBG into the hydroxymethylbilane pre-uroporphyrinogen in several discrete steps. In Deinococcus radiodurans (strain ATCC 13939 / DSM 20539 / JCM 16871 / CCUG 27074 / LMG 4051 / NBRC 15346 / NCIMB 9279 / VKM B-1422 / R1), this protein is Porphobilinogen deaminase (hemC).